Consider the following 509-residue polypeptide: L-aspartate semialdehyde sulfurtransferase (509 aa).

The active-site Cysteine persulfide intermediate is the cysteine 133. CBS domains lie at 394–450 (LSKP…NKKT) and 455–509 (MTRN…GGKK). The S-methyl-5'-thioadenosine site is built by serine 395, isoleucine 399, and histidine 421. Residues aspartate 439, threonine 456, isoleucine 460, and 479–482 (NISG) contribute to the S-adenosyl-L-methionine site. Residue 497 to 500 (TSED) coordinates S-methyl-5'-thioadenosine.

This sequence belongs to the L-aspartate semialdehyde sulfurtransferase family. Homodimer. May form a complex with MJ0099.

It carries out the reaction L-aspartate 4-semialdehyde + reduced 2[4Fe-4S]-[ferredoxin] + hydrogen sulfide + 3 H(+) = oxidized 2[4Fe-4S]-[ferredoxin] + L-homocysteine + H2O. It participates in amino-acid biosynthesis. With respect to regulation, the ligand-induced conformational reorganization of the protein could be an important regulatory mechanism. In terms of biological role, required for O-acetylhomoserine sulfhydrylase (OAHS)-independent homocysteine (Hcy) biosynthesis. Together with MJ0099, catalyzes the condensation of sulfide with aspartate semialdehyde to generate homocysteine. Likely functions through persulfide intermediate. The chain is L-aspartate semialdehyde sulfurtransferase from Methanocaldococcus jannaschii (strain ATCC 43067 / DSM 2661 / JAL-1 / JCM 10045 / NBRC 100440) (Methanococcus jannaschii).